Reading from the N-terminus, the 443-residue chain is UDP-N-acetylmuramate--L-alanine ligase (443 aa).

Position 111 to 117 (111 to 117 (GAHGKTS)) interacts with ATP.

Belongs to the MurCDEF family.

Its subcellular location is the cytoplasm. The catalysed reaction is UDP-N-acetyl-alpha-D-muramate + L-alanine + ATP = UDP-N-acetyl-alpha-D-muramoyl-L-alanine + ADP + phosphate + H(+). It functions in the pathway cell wall biogenesis; peptidoglycan biosynthesis. Its function is as follows. Cell wall formation. The polypeptide is UDP-N-acetylmuramate--L-alanine ligase (Levilactobacillus brevis (strain ATCC 367 / BCRC 12310 / CIP 105137 / JCM 1170 / LMG 11437 / NCIMB 947 / NCTC 947) (Lactobacillus brevis)).